The following is a 428-amino-acid chain: Glutamate-1-semialdehyde 2,1-aminomutase (428 aa).

Position 265 is an N6-(pyridoxal phosphate)lysine (lysine 265).

It belongs to the class-III pyridoxal-phosphate-dependent aminotransferase family. HemL subfamily. As to quaternary structure, homodimer. The cofactor is pyridoxal 5'-phosphate.

It localises to the cytoplasm. The enzyme catalyses (S)-4-amino-5-oxopentanoate = 5-aminolevulinate. The protein operates within porphyrin-containing compound metabolism; protoporphyrin-IX biosynthesis; 5-aminolevulinate from L-glutamyl-tRNA(Glu): step 2/2. The polypeptide is Glutamate-1-semialdehyde 2,1-aminomutase (Aeromonas salmonicida (strain A449)).